A 263-amino-acid chain; its full sequence is Neurogenin-2 (263 aa).

The disordered stretch occupies residues 20–76 (LGSASPASATLTPMSSSADEEEDEELRRPGSARGQRGAEAEQGVQGSPASGAGGCRP). A compositionally biased stretch (polar residues) spans 24–36 (SPASATLTPMSSS). The bHLH domain occupies 112–164 (TRRLKANNRERNRMHNLNAALDALREVLPTFPEDAKLTKIETLRFAHNYIWAL). The segment covering 197-231 (LGASGDSPSPPSSWSCTNSPASSSNSTSPYSCTLS) has biased composition (low complexity). The disordered stretch occupies residues 197 to 253 (LGASGDSPSPPSSWSCTNSPASSSNSTSPYSCTLSPASPGSDVDYWQPPPPEKHRYA).

As to quaternary structure, efficient DNA binding requires dimerization with another bHLH protein.

It localises to the nucleus. In terms of biological role, transcriptional regulator. Involved in neuronal differentiation. Activates transcription by binding to the E box (5'-CANNTG-3'). This Mus musculus (Mouse) protein is Neurogenin-2 (Neurog2).